A 32-amino-acid polypeptide reads, in one-letter code: Mu-theraphotoxin-Se1a (32 aa).

Intrachain disulfides connect Cys-2–Cys-17, Cys-9–Cys-22, and Cys-16–Cys-28.

Belongs to the neurotoxin 10 (Hwtx-1) family. Expressed by the venom gland.

It is found in the secreted. In terms of biological role, voltage-gated sodium channel Nav1.7/SCN9A inhibitor. This Selenocosmia effera (Tarantula spider) protein is Mu-theraphotoxin-Se1a.